The primary structure comprises 547 residues: Glutamyl-tRNA(Gln) amidotransferase subunit B, mitochondrial (547 aa).

Belongs to the GatB/GatE family. GatB subfamily. Subunit of the heterotrimeric GatFAB amidotransferase (AdT) complex, composed of A, B and F subunits.

The protein resides in the mitochondrion. The catalysed reaction is L-glutamyl-tRNA(Gln) + L-glutamine + ATP + H2O = L-glutaminyl-tRNA(Gln) + L-glutamate + ADP + phosphate + H(+). Allows the formation of correctly charged Gln-tRNA(Gln) through the transamidation of misacylated Glu-tRNA(Gln) in the mitochondria. The reaction takes place in the presence of glutamine and ATP through an activated gamma-phospho-Glu-tRNA(Gln). The chain is Glutamyl-tRNA(Gln) amidotransferase subunit B, mitochondrial from Lachancea thermotolerans (strain ATCC 56472 / CBS 6340 / NRRL Y-8284) (Yeast).